The sequence spans 263 residues: H-2 class II histocompatibility antigen, A-K beta chain (263 aa).

Positions 1-27 are cleaved as a signal peptide; sequence MALQIPSLLLLAAVVVLTVLSSPGTEG. Positions 28–120 are beta-1; sequence GNSERHFVHQ…TETPTSLRRL (93 aa). At 28-224 the chain is on the extracellular side; the sequence is GNSERHFVHQ…RAQSESARSK (197 aa). 2 disulfides stabilise this stretch: C42-C104 and C143-C199. N-linked (GlcNAc...) asparagine glycosylation is present at N46. The beta-2 stretch occupies residues 121 to 214; the sequence is EQPSVVISLS…SLKSPITVEW (94 aa). The Ig-like C1-type domain occupies 123 to 211; that stretch reads PSVVISLSRT…EHPSLKSPIT (89 aa). Residues 215–224 form a connecting peptide region; that stretch reads RAQSESARSK. Residues 225 to 245 traverse the membrane as a helical segment; sequence MLSGIGGCVLGVIFLGLGLFI. Residues 246-263 lie on the Cytoplasmic side of the membrane; sequence RHRSQKGPRGPPPAGLLQ.

The protein belongs to the MHC class II family. Post-translationally, ubiquitinated in immature dendritic cells leading to down-regulation of MHC class II.

The protein resides in the membrane. The sequence is that of H-2 class II histocompatibility antigen, A-K beta chain (H2-Ab1) from Mus musculus (Mouse).